We begin with the raw amino-acid sequence, 136 residues long: Large ribosomal subunit protein eL27B (136 aa).

Belongs to the eukaryotic ribosomal protein eL27 family. In terms of assembly, component of the large ribosomal subunit (LSU). Mature yeast ribosomes consist of a small (40S) and a large (60S) subunit. The 40S small subunit contains 1 molecule of ribosomal RNA (18S rRNA) and at least 33 different proteins. The large 60S subunit contains 3 rRNA molecules (25S, 5.8S and 5S rRNA) and at least 46 different proteins.

Its subcellular location is the cytoplasm. Component of the ribosome, a large ribonucleoprotein complex responsible for the synthesis of proteins in the cell. The small ribosomal subunit (SSU) binds messenger RNAs (mRNAs) and translates the encoded message by selecting cognate aminoacyl-transfer RNA (tRNA) molecules. The large subunit (LSU) contains the ribosomal catalytic site termed the peptidyl transferase center (PTC), which catalyzes the formation of peptide bonds, thereby polymerizing the amino acids delivered by tRNAs into a polypeptide chain. The nascent polypeptides leave the ribosome through a tunnel in the LSU and interact with protein factors that function in enzymatic processing, targeting, and the membrane insertion of nascent chains at the exit of the ribosomal tunnel. This is Large ribosomal subunit protein eL27B (rpl2702) from Schizosaccharomyces pombe (strain 972 / ATCC 24843) (Fission yeast).